Here is a 105-residue protein sequence, read N- to C-terminus: Large ribosomal subunit protein uL24 (105 aa).

The protein belongs to the universal ribosomal protein uL24 family. As to quaternary structure, part of the 50S ribosomal subunit.

One of two assembly initiator proteins, it binds directly to the 5'-end of the 23S rRNA, where it nucleates assembly of the 50S subunit. Functionally, one of the proteins that surrounds the polypeptide exit tunnel on the outside of the subunit. This chain is Large ribosomal subunit protein uL24, found in Aeromonas salmonicida (strain A449).